The chain runs to 284 residues: 4-hydroxybenzoate octaprenyltransferase (284 aa).

9 consecutive transmembrane segments (helical) span residues 19–39, 42–62, 85–105, 107–127, 134–154, 165–185, 211–231, 233–253, and 261–281; these read IPIL…SHGL, ISYL…GCII, GQLS…VAFI, VLFL…LAIL, FFAI…FMAF, AWIF…IYAL, ILLF…YCDF, SFFY…YFLY, and CINA…IAVI.

Belongs to the UbiA prenyltransferase family. Mg(2+) serves as cofactor.

It is found in the cell inner membrane. It catalyses the reaction all-trans-octaprenyl diphosphate + 4-hydroxybenzoate = 4-hydroxy-3-(all-trans-octaprenyl)benzoate + diphosphate. Its pathway is cofactor biosynthesis; ubiquinone biosynthesis. In terms of biological role, catalyzes the prenylation of para-hydroxybenzoate (PHB) with an all-trans polyprenyl group. Mediates the second step in the final reaction sequence of ubiquinone-8 (UQ-8) biosynthesis, which is the condensation of the polyisoprenoid side chain with PHB, generating the first membrane-bound Q intermediate 3-octaprenyl-4-hydroxybenzoate. This is 4-hydroxybenzoate octaprenyltransferase from Francisella tularensis subsp. tularensis (strain FSC 198).